A 416-amino-acid chain; its full sequence is Orexin/Hypocretin receptor type 1 (416 aa).

The disordered stretch occupies residues 1–22; that stretch reads MEPSATPGAQPGVPTSSGEPFH. Residues 1–46 lie on the Extracellular side of the membrane; that stretch reads MEPSATPGAQPGVPTSSGEPFHLPPDYEDEFLRYLWRDYLYPKQYE. Residues 26-41 are required for response to orexin-A; it reads DYEDEFLRYLWRDYLY. The chain crosses the membrane as a helical span at residues 47–67; that stretch reads WVLIAAYVAVFLIALVGNTLV. Residues 68-82 lie on the Cytoplasmic side of the membrane; the sequence is CLAVWRNHHMRTVTN. A helical transmembrane segment spans residues 83 to 105; sequence YFIVNLSLADVLVTAICLPASLL. Topologically, residues 106-119 are extracellular; it reads VDITESWLFGQALC. An intrachain disulfide couples C119 to C202. Residues 120–140 form a helical membrane-spanning segment; that stretch reads KVIPYLQAVSVSVAVLTLSFI. Residues 141 to 160 lie on the Cytoplasmic side of the membrane; that stretch reads ALDRWYAICHPLLFKSTARR. The helical transmembrane segment at 161 to 182 threads the bilayer; the sequence is ARGSILGIWAVSLAVMVPQAAV. Over 183 to 213 the chain is Extracellular; sequence MECSSVLPELANRTRLFSVCDEHWADELYPK. N194 carries N-linked (GlcNAc...) asparagine glycosylation. Residues 214-235 traverse the membrane as a helical segment; it reads IYHSCFFIVTYLAPLGLMAMAY. Topologically, residues 236–298 are cytoplasmic; sequence FQIFRKLWGR…QMRARRKTAK (63 aa). A helical membrane pass occupies residues 299–321; that stretch reads MLMVVLLVFALCYLPISVLNVLK. At 322 to 336 the chain is on the extracellular side; that stretch reads RVFGMFRQASDREAV. The helical transmembrane segment at 337-360 threads the bilayer; it reads YACFTFSHWLVYANSAANPIIYNF. The Cytoplasmic portion of the chain corresponds to 361–416; sequence LSGKFREQFKAAFSCCLPGLGPGSSARHKSLSLQSRCSVSKVSEHVVLTTVTTVLS.

It belongs to the G-protein coupled receptor 1 family. As to expression, widely expressed.

It localises to the cell membrane. Its function is as follows. Moderately selective excitatory receptor for orexin-A and, with a lower affinity, for orexin-B neuropeptide. Triggers an increase in cytoplasmic Ca(2+) levels in response to orexin-A binding. The chain is Orexin/Hypocretin receptor type 1 from Mus musculus (Mouse).